Reading from the N-terminus, the 504-residue chain is Deoxyguanosinetriphosphate triphosphohydrolase (504 aa).

Residues 66–273 (RLTHSLEVQQ…MEAADDISYC (208 aa)) form the HD domain.

This sequence belongs to the dGTPase family. Type 1 subfamily. In terms of assembly, homotetramer. Requires Mg(2+) as cofactor.

The enzyme catalyses dGTP + H2O = 2'-deoxyguanosine + triphosphate + H(+). Its function is as follows. dGTPase preferentially hydrolyzes dGTP over the other canonical NTPs. This is Deoxyguanosinetriphosphate triphosphohydrolase from Cronobacter sakazakii (strain ATCC BAA-894) (Enterobacter sakazakii).